A 681-amino-acid chain; its full sequence is MENRNTHTHPESKADAPAVQSSSGLSSTKKKTDSEPTVSAGQTGLADATERDNRKQPVAPRGPERELRPTGSSQDGSGELPTQEPSARPRTTQDGPRELQAGPEQVQPSGDFVASEGRPQPAMQTKDQQKRWQSAEVKEILLAESCQGNTDHDLGKPRPSNSRSQPLKNNSPSEAGRPQVRLQEPMPAPGSGTHKDNPQEAVPPKPKVTAEEKKAPPVLPSVPGPRTHKDRGEAAEIRATLRLQPPPPPLPEERDTEKKELGQGQKQRQQALSAAGTQGPANSRRGFMKCLLEVEEQEEATHRRTLKSRGLTARRSPKTVTSVSTSGPISSSVPTLPLTLHEPSTSAPASVPSWVRPPAPGQTPIPMGSPGSVLPTSAQDQNWRWPEFLPQGNERTLTYAKILRQEPEEHSLFRMYQSWEERTEEHLTLKQEEAFRSYFDIFNGPGEVDARSLKNILLLIGFTFTPAQVEEALMSADVNGDGHVDFKDFLAVMTDTKRFFCSVEQNVLMDMSPRNPYTLFFEILSLLVEMLALPELALEEITNYYQKKLKEGSSKAREMESAMGGLRQRKKIPYNPQQVENLEVPERRVLRILSRLKQQNYAANLQSPYAQVPCIPLCPRLDKKAVRRKLASHNHSVLDQCVSTSLGPDFHGLFFQPGQQGSREHSSDSRKWLSSMPARTH.

The segment covering 1–14 (MENRNTHTHPESKA) has biased composition (basic and acidic residues). Disordered stretches follow at residues 1–284 (MENR…ANSR) and 298–336 (EEAT…VPTL). Composition is skewed to polar residues over residues 83-94 (QEPSARPRTTQD) and 159-173 (PSNS…NSPS). The segment covering 251–261 (PEERDTEKKEL) has biased composition (basic and acidic residues). The segment covering 264-281 (GQKQRQQALSAAGTQGPA) has biased composition (polar residues). The span at 319 to 335 (TVTSVSTSGPISSSVPT) shows a compositional bias: low complexity. The EF-hand domain occupies 464–499 (FTPAQVEEALMSADVNGDGHVDFKDFLAVMTDTKRF). Ca(2+) is bound by residues D477, N479, D481, H483, and D488. Positions 653–681 (LFFQPGQQGSREHSSDSRKWLSSMPARTH) are disordered. Residues 662–671 (SREHSSDSRK) are compositionally biased toward basic and acidic residues.

Involved in the differentiation of haploid spermatids. This is Spermatogenesis-associated protein 21 (Spata21) from Mus musculus (Mouse).